Reading from the N-terminus, the 174-residue chain is NADH-ubiquinone oxidoreductase chain 6 (174 aa).

A run of 5 helical transmembrane segments spans residues methionine 1–serine 21, serine 24–leucine 44, glycine 47–phenylalanine 67, valine 86–alanine 106, and tryptophan 151–alanine 171.

Belongs to the complex I subunit 6 family. Core subunit of respiratory chain NADH dehydrogenase (Complex I) which is composed of 45 different subunits.

Its subcellular location is the mitochondrion inner membrane. The catalysed reaction is a ubiquinone + NADH + 5 H(+)(in) = a ubiquinol + NAD(+) + 4 H(+)(out). In terms of biological role, core subunit of the mitochondrial membrane respiratory chain NADH dehydrogenase (Complex I) which catalyzes electron transfer from NADH through the respiratory chain, using ubiquinone as an electron acceptor. Essential for the catalytic activity and assembly of complex I. This is NADH-ubiquinone oxidoreductase chain 6 (MT-ND6) from Hylobates lar (Lar gibbon).